The primary structure comprises 202 residues: MFTIGLTGGIGSGKSAAAERFAELGVPVIDTDVIAHELTRPGSRALDVIRASFGEAVIAADGSLDRPVLRRRVFVDPAARRQLEAILHPLILHEVKARLASLSGPYAVAVIPLLVETGAYDAPVDRIAVVDCPEELQIARTIARSGLTPDEVGAILAAQAARPARLAVADDVIVNTGSLAALRDQVDALHQRYLTLAANRLP.

One can recognise a DPCK domain in the interval 3–200 (TIGLTGGIGS…QRYLTLAANR (198 aa)). 11–16 (GSGKSA) is an ATP binding site.

It belongs to the CoaE family.

The protein resides in the cytoplasm. The catalysed reaction is 3'-dephospho-CoA + ATP = ADP + CoA + H(+). It functions in the pathway cofactor biosynthesis; coenzyme A biosynthesis; CoA from (R)-pantothenate: step 5/5. Its function is as follows. Catalyzes the phosphorylation of the 3'-hydroxyl group of dephosphocoenzyme A to form coenzyme A. This Thiobacillus denitrificans (strain ATCC 25259 / T1) protein is Dephospho-CoA kinase.